Consider the following 2036-residue polypeptide: Proline-rich protein 12 (2036 aa).

Disordered stretches follow at residues G210–P283, C331–G587, and A649–R697. Positions Q223–H240 are enriched in pro residues. The span at A249 to A258 shows a compositional bias: low complexity. Residues S332 and S340 each carry the phosphoserine modification. Residues S340 to P365 show a composition bias toward low complexity. 2 stretches are compositionally biased toward gly residues: residues A367–Y380 and T391–A400. Composition is skewed to low complexity over residues S411–A432 and Q441–G458. The segment covering P479–G490 has biased composition (pro residues). 2 stretches are compositionally biased toward polar residues: residues T493–G504 and G523–H537. Gly residues predominate over residues G543–E558. S651 carries the phosphoserine modification. The span at G673–P683 shows a compositional bias: gly residues. T738 carries the phosphothreonine modification. Disordered stretches follow at residues A758–L850, L859–G878, A886–R925, and E952–K1068. Residues L802–S817 show a composition bias toward low complexity. Residues P833 to P847 are compositionally biased toward pro residues. At S865 the chain carries Phosphoserine. Pro residues predominate over residues A1037–A1052. Phosphoserine is present on residues S1077 and S1135. Disordered regions lie at residues R1120–R1260, R1294–L1347, T1376–I1573, and H1668–L1840. The segment covering P1182–T1194 has biased composition (low complexity). The span at K1199–G1208 shows a compositional bias: basic residues. The span at R1209–K1223 shows a compositional bias: basic and acidic residues. The residue at position 1223 (K1223) is an N6-acetyllysine. Over residues G1239–S1257 the composition is skewed to polar residues. Residue T1304 is modified to Phosphothreonine. Composition is skewed to pro residues over residues P1306 to V1317 and P1324 to S1338. S1308 bears the Phosphoserine mark. S1381, S1382, and S1387 each carry phosphoserine. 2 stretches are compositionally biased toward pro residues: residues D1420–G1438 and P1458–P1535. A compositionally biased stretch (basic and acidic residues) spans P1541–E1553. Position 1561 is a phosphothreonine (T1561). S1568 carries the phosphoserine modification. Residues A1691–P1703 show a composition bias toward pro residues. 2 stretches are compositionally biased toward basic and acidic residues: residues E1704 to P1715 and P1737 to R1769. Residue T1705 is modified to Phosphothreonine. Over residues G1817–P1829 the composition is skewed to low complexity. S1925 is subject to Phosphoserine.

It is found in the nucleus. The protein localises to the postsynaptic density. The protein resides in the synapse. Its subcellular location is the synaptosome. The protein is Proline-rich protein 12 of Homo sapiens (Human).